Consider the following 881-residue polypeptide: Nitrate reductase [NADH] 1 (881 aa).

The tract at residues M1–N46 is disordered. Position 167 (C167) interacts with Mo-molybdopterin. Residues T515–M590 form the Cytochrome b5 heme-binding domain. Heme is bound by residues H550 and H573. The 113-residue stretch at R625–T737 folds into the FAD-binding FR-type domain. Residues R677–T680, V694–Y698, F699, F706, I711–S713, and T764 contribute to the FAD site.

This sequence belongs to the nitrate reductase family. As to quaternary structure, homodimer. The cofactor is FAD. Requires heme as cofactor. It depends on Mo-molybdopterin as a cofactor.

The enzyme catalyses nitrite + NAD(+) + H2O = nitrate + NADH + H(+). Nitrate reductase is a key enzyme involved in the first step of nitrate assimilation in plants, fungi and bacteria. The sequence is that of Nitrate reductase [NADH] 1 (NIA1) from Phaseolus vulgaris (Kidney bean).